A 414-amino-acid polypeptide reads, in one-letter code: Mannan endo-1,4-beta-mannosidase 2 (414 aa).

An N-terminal signal peptide occupies residues 1-25 (MAYFQRLISCIFVLFLLSLAFACEA). Residues Trp95 and Asn210 each contribute to the substrate site. The Proton donor role is filled by Glu211. Tyr288 provides a ligand contact to substrate. Residue Glu328 is the Nucleophile of the active site. A substrate-binding site is contributed by Trp370.

This sequence belongs to the glycosyl hydrolase 5 (cellulase A) family.

The protein resides in the secreted. The enzyme catalyses Random hydrolysis of (1-&gt;4)-beta-D-mannosidic linkages in mannans, galactomannans and glucomannans.. Possesses endo-beta-mannanase activity in vitro. May be involved in seed germination by weakening the endosperm cap prior to radicle emergence. This Solanum lycopersicum (Tomato) protein is Mannan endo-1,4-beta-mannosidase 2 (MAN2).